A 384-amino-acid chain; its full sequence is uncharacterized protein (384 aa).

Disordered stretches follow at residues 133–257 (RQNS…TNQD) and 297–368 (ERTP…STAT). Low complexity predominate over residues 143-157 (PSTSSEPEPQPSTSS). Acidic residues predominate over residues 302–315 (DQTDITDDSADWSE). Residues 316–342 (GETRRPSHSEVGERRLSRENNSEDPNR) are compositionally biased toward basic and acidic residues. Residues 343–363 (SRSRSRSRERRRRRPRVRPGR) are compositionally biased toward basic residues.

This is an uncharacterized protein from Gallid herpesvirus 2 (strain Chicken/Md5/ATCC VR-987) (GaHV-2).